A 77-amino-acid polypeptide reads, in one-letter code: MANIKSAIKRAELNVKANEKNSAQKSAMRTAIKAFEANPSEELFRAASSSIDKAESKGLIHKNKASRDKARLAAKLG.

Residues 47–77 (ASSSIDKAESKGLIHKNKASRDKARLAAKLG) form a disordered region.

This sequence belongs to the bacterial ribosomal protein bS20 family.

In terms of biological role, binds directly to 16S ribosomal RNA. This chain is Small ribosomal subunit protein bS20, found in Streptococcus pyogenes serotype M1.